Consider the following 286-residue polypeptide: Probable ketoamine kinase EAE_16955 (286 aa).

92–94 (EYL) contacts ATP. The active-site Proton acceptor is the Asp-194.

This sequence belongs to the fructosamine kinase family.

Ketoamine kinase that phosphorylates ketoamines on the third carbon of the sugar moiety to generate ketoamine 3-phosphate. The sequence is that of Probable ketoamine kinase EAE_16955 from Klebsiella aerogenes (strain ATCC 13048 / DSM 30053 / CCUG 1429 / JCM 1235 / KCTC 2190 / NBRC 13534 / NCIMB 10102 / NCTC 10006 / CDC 819-56) (Enterobacter aerogenes).